The chain runs to 500 residues: Inner membrane transporter YjeM (500 aa).

Over 1–7 (MPHTIKK) the chain is Cytoplasmic. The chain crosses the membrane as a helical span at residues 8–28 (MSLIGLILMIFTSVFGFANSP). The Periplasmic segment spans residues 29 to 37 (SAYYLMGYS). The chain crosses the membrane as a helical span at residues 38–58 (AIPFYIFSALLFFIPFALMMA). Residues 59 to 82 (EMGAAYRKEEGGIYSWMNNSVGPR) are Cytoplasmic-facing. A helical membrane pass occupies residues 83–103 (FAFIGTFMWFSSYIIWMVSTS). Over 104 to 132 (AKVWVPFSTFLYGSDMTQHWRIAGLEPTQ) the chain is Periplasmic. The chain crosses the membrane as a helical span at residues 133–153 (VVGLLAVAWMILVTVVASKGI). Topologically, residues 154–163 (NKIARITAVG) are cytoplasmic. Residues 164 to 184 (GIAVMCLNLVLLLVSITILLL) form a helical membrane-spanning segment. Residues 185–209 (NGGHFAQDINFLASPNPGYQSGLAM) are Periplasmic-facing. A helical transmembrane segment spans residues 210 to 230 (LSFVVFAIFAYGGIEAVGGLV). Over 231 to 243 (DKTENPEKNFAKG) the chain is Cytoplasmic. Residues 244-264 (IVFAAIVISIGYSLAIFLWGV) form a helical membrane-spanning segment. The Periplasmic segment spans residues 265-319 (STNWQQVLSNGSVNLGNITYVLMKSLGMTLGNALHLSPEASLSLGVWFARITGLS). The chain crosses the membrane as a helical span at residues 320 to 340 (MFLAYTGAFFTLCYSPLKAII). Residues 341-369 (QGTPKALWPEPMTRLNAMGMPSIAMWMQC) lie on the Cytoplasmic side of the membrane. Residues 370-390 (GLVTVFILLVSFGGGTASAFF) form a helical membrane-spanning segment. Over 391 to 394 (NKLT) the chain is Periplasmic. The chain crosses the membrane as a helical span at residues 395 to 415 (LMANVSMTLPYLFLALAFPFF). The Cytoplasmic segment spans residues 416-433 (KARQDLDRPFVIFKTHLS). Residues 434–454 (AMIATVVVVLVVTFANVFTII) form a helical membrane-spanning segment. The Periplasmic portion of the chain corresponds to 455-462 (QPVVEAGD). The helical transmembrane segment at 463-483 (WDSTLWMIGGPVFFSLLAMAI) threads the bilayer. At 484–500 (YQNYCSRVAKNPQWAVE) the chain is on the cytoplasmic side.

This sequence belongs to the amino acid-polyamine-organocation (APC) superfamily.

The protein resides in the cell inner membrane. This is Inner membrane transporter YjeM (yjeM) from Escherichia coli (strain K12).